Here is a 978-residue protein sequence, read N- to C-terminus: MNFSRVNLFDFPLRPILLSHPSSIFVSTRFVTRTSAGVSPSILLPRSTQSPQIIAKSSSVSVQPVSEDAKEDYQSKDVSGDSIRRRFLEFFASRGHKVLPSSSLVPEDPTVLLTIAGMLQFKPIFLGKVPREVPCATTAQRCIRTNDLENVGKTARHHTFFEMLGNFSFGDYFKKEAIKWAWELSTIEFGLPANRVWVSIYEDDDEAFEIWKNEVGVSVERIKRMGEADNFWTSGPTGPCGPCSELYYDFYPERGYDEDVDLGDDTRFIEFYNLVFMQYNKTEDGLLEPLKQKNIDTGLGLERIAQILQKVPNNYETDLIYPIIAKISELANISYDSANDKAKTSLKVIADHMRAVVYLISDGVSPSNIGRGYVVRRLIRRAVRKGKSLGINGDMNGNLKGAFLPAVAEKVIELSTYIDSDVKLKASRIIEEIRQEELHFKKTLERGEKLLDQKLNDALSIADKTKDTPYLDGKDAFLLYDTFGFPVEITAEVAEERGVSIDMNGFEVEMENQRRQSQAAHNVVKLTVEDDADMTKNIADTEFLGYDSLSARAVVKSLLVNGKPVIRVSEGSEVEVLLDRTPFYAESGGQIADHGFLYVSSDGNQEKAVVEVSDVQKSLKIFVHKGTVKSGALEVGKEVEAAVDADLRQRAKVHHTATHLLQSALKKVVGQETSQAGSLVAFDRLRFDFNFNRSLHDNELEEIECLINRWIGDATRLETKVLPLADAKRAGAIAMFGEKYDENEVRVVEVPGVSMELCGGTHVGNTAEIRAFKIISEQGIASGIRRIEAVAGEAFIEYINSRDSQMTRLCSTLKVKAEDVTNRVENLLEELRAARKEASDLRSKAAVYKASVISNKAFTVGTSQTIRVLVESMDDTDADSLKSAAEHLISTLEDPVAVVLGSSPEKDKVSLVAAFSPGVVSLGVQAGKFIGPIAKLCGGGGGGKPNFAQAGGRKPENLPSALEKAREDLVATLSEKLG.

Zn(2+)-binding residues include H655, H659, C758, and H762. K773 participates in a covalent cross-link: Glycyl lysine isopeptide (Lys-Gly) (interchain with G-Cter in ubiquitin).

It belongs to the class-II aminoacyl-tRNA synthetase family. As to quaternary structure, monomer. It depends on Zn(2+) as a cofactor.

It is found in the plastid. Its subcellular location is the chloroplast. The protein localises to the mitochondrion. The catalysed reaction is tRNA(Ala) + L-alanine + ATP = L-alanyl-tRNA(Ala) + AMP + diphosphate. Catalyzes the attachment of alanine to tRNA(Ala) in a two-step reaction: alanine is first activated by ATP to form Ala-AMP and then transferred to the acceptor end of tRNA(Ala). Also edits incorrectly charged tRNA(Ala) via its editing domain. This Arabidopsis thaliana (Mouse-ear cress) protein is Alanine--tRNA ligase, chloroplastic/mitochondrial (EMB86).